The sequence spans 623 residues: Chaperone protein HtpG (623 aa).

Positions 1–336 are a; substrate-binding; it reads MVSKQQTMGF…ASDLPLNISR (336 aa). The interval 337–550 is b; that stretch reads EILQDNKQVE…EQDMGLEMQR (214 aa). Residues 551–623 are c; that stretch reads ILQAAGQQVP…NRVNRLLVSS (73 aa).

The protein belongs to the heat shock protein 90 family. Homodimer.

It is found in the cytoplasm. Molecular chaperone. Has ATPase activity. The sequence is that of Chaperone protein HtpG from Legionella pneumophila subsp. pneumophila (strain Philadelphia 1 / ATCC 33152 / DSM 7513).